The following is a 342-amino-acid chain: GTPase Obg (342 aa).

The region spanning 1–159 (MKFLDLCKVY…RTIWLRLKLI (159 aa)) is the Obg domain. The region spanning 160–327 (ADAGLLGLPN…VLRALWAEID (168 aa)) is the OBG-type G domain. GTP contacts are provided by residues 166-173 (GLPNAGKS), 191-195 (FTTLV), 212-215 (DIPG), 279-282 (NKID), and 308-310 (SGV). Mg(2+) is bound by residues serine 173 and threonine 193.

It belongs to the TRAFAC class OBG-HflX-like GTPase superfamily. OBG GTPase family. Monomer. Mg(2+) is required as a cofactor.

Its subcellular location is the cytoplasm. Functionally, an essential GTPase which binds GTP, GDP and possibly (p)ppGpp with moderate affinity, with high nucleotide exchange rates and a fairly low GTP hydrolysis rate. Plays a role in control of the cell cycle, stress response, ribosome biogenesis and in those bacteria that undergo differentiation, in morphogenesis control. This chain is GTPase Obg, found in Cereibacter sphaeroides (strain KD131 / KCTC 12085) (Rhodobacter sphaeroides).